A 158-amino-acid chain; its full sequence is NAD(P)H-quinone oxidoreductase subunit J, chloroplastic (158 aa).

Belongs to the complex I 30 kDa subunit family. In terms of assembly, NDH is composed of at least 16 different subunits, 5 of which are encoded in the nucleus.

The protein resides in the plastid. It localises to the chloroplast thylakoid membrane. The enzyme catalyses a plastoquinone + NADH + (n+1) H(+)(in) = a plastoquinol + NAD(+) + n H(+)(out). It carries out the reaction a plastoquinone + NADPH + (n+1) H(+)(in) = a plastoquinol + NADP(+) + n H(+)(out). NDH shuttles electrons from NAD(P)H:plastoquinone, via FMN and iron-sulfur (Fe-S) centers, to quinones in the photosynthetic chain and possibly in a chloroplast respiratory chain. The immediate electron acceptor for the enzyme in this species is believed to be plastoquinone. Couples the redox reaction to proton translocation, and thus conserves the redox energy in a proton gradient. In Nandina domestica (Heavenly bamboo), this protein is NAD(P)H-quinone oxidoreductase subunit J, chloroplastic.